The following is a 285-amino-acid chain: Putative cytochrome c peroxidase, mitochondrial (285 aa).

The active-site Proton acceptor is histidine 37. Histidine 161 serves as a coordination point for heme b. The active-site Tryptophan radical intermediate is tryptophan 177.

This sequence belongs to the peroxidase family. Cytochrome c peroxidase subfamily. Forms a one-to-one complex with cytochrome c. Heme b is required as a cofactor.

The protein localises to the mitochondrion matrix. It localises to the mitochondrion intermembrane space. It carries out the reaction 2 Fe(II)-[cytochrome c] + H2O2 + 2 H(+) = 2 Fe(III)-[cytochrome c] + 2 H2O. Functionally, destroys radicals which are normally produced within the cells and which are toxic to biological systems. This Yarrowia lipolytica (strain CLIB 122 / E 150) (Yeast) protein is Putative cytochrome c peroxidase, mitochondrial.